The following is a 541-amino-acid chain: Glucose-6-phosphate isomerase (541 aa).

The Proton donor role is filled by glutamate 346. Catalysis depends on residues histidine 377 and lysine 506.

This sequence belongs to the GPI family.

The protein resides in the cytoplasm. It carries out the reaction alpha-D-glucose 6-phosphate = beta-D-fructose 6-phosphate. It participates in carbohydrate biosynthesis; gluconeogenesis. The protein operates within carbohydrate degradation; glycolysis; D-glyceraldehyde 3-phosphate and glycerone phosphate from D-glucose: step 2/4. Catalyzes the reversible isomerization of glucose-6-phosphate to fructose-6-phosphate. This is Glucose-6-phosphate isomerase from Rhizobium rhizogenes (strain K84 / ATCC BAA-868) (Agrobacterium radiobacter).